Here is a 393-residue protein sequence, read N- to C-terminus: FAD-dependent monooxygenase dbaB (393 aa).

The N-terminal stretch at Met-1–Ala-23 is a signal peptide. 2 residues coordinate FAD: Glu-37 and Arg-107. An N-linked (GlcNAc...) asparagine glycan is attached at Asn-128. Tyr-221 is a catalytic residue. N-linked (GlcNAc...) asparagine glycosylation is present at Asn-233. Asp-320 contacts FAD.

This sequence belongs to the paxM FAD-dependent monooxygenase family. It depends on FAD as a cofactor.

It participates in secondary metabolite biosynthesis. Functionally, FAD-dependent monooxygenase; part of the gene cluster that mediates the biosynthesis of the antibiotic 2,4-dihydroxy-3-methyl-6-(2-oxopropyl)benzaldehyde (DHMBA) and its derivatives. The direct non-reducing polyketide synthase dbaI product is 2,4-dihydroxy-3-methyl-6-(2-oxopropyl)benzaldehyde (DHMBA), produced by condensation of one acetyl-CoA starter unit with 4 malonyl-CoA units and one methylation step. The FAD-dependent monooxygenase dbaH is responsible for the synthesis of yellow pigments derived from the oxidation of DHMBA. The roles of dbaB, C, E and F have still to be determined. In Emericella nidulans (strain FGSC A4 / ATCC 38163 / CBS 112.46 / NRRL 194 / M139) (Aspergillus nidulans), this protein is FAD-dependent monooxygenase dbaB.